A 573-amino-acid chain; its full sequence is Maestro heat-like repeat-containing protein family member 9 (573 aa).

HEAT repeat units follow at residues 118–155 (LYKL…FTVT), 252–289 (PLLT…FHAE), 292–328 (TMVS…TSPK), 357–394 (SVAP…ITNL), and 418–458 (QYFP…LLNC).

This is Maestro heat-like repeat-containing protein family member 9 (MROH9) from Homo sapiens (Human).